We begin with the raw amino-acid sequence, 375 residues long: SAP-like protein BP-73 (375 aa).

Disordered regions lie at residues 46–113 (PNNH…VPGE), 130–233 (RARG…VKFQ), and 257–315 (TLEN…PSLQ). The span at 59 to 70 (HQKGGSARRKSK) shows a compositional bias: basic residues. Residues 76-86 (DDSENIDEFDT) are compositionally biased toward acidic residues. Polar residues predominate over residues 88 to 109 (IMSSKNGPPISLTSNSRPQATS). 2 stretches are compositionally biased toward basic and acidic residues: residues 134–152 (KGKE…ERGS) and 163–186 (HSVD…KRSN). Polar residues predominate over residues 187 to 197 (ESGNKQNSSIF). Acidic residues predominate over residues 295–311 (DEPDASDTDEPSGEYDE). The interval 338-375 (DLSTLKVTELRELAKSRGIKGYSKMKKNDLVELLSNMA) is interaction with WAXY.

In terms of assembly, binds to the DNA in the promoter region of WAXY containing the sequence 5'-ACGCACGCTAACGTGA-3'. As to expression, expressed in tissues with high cell division activities: in root tips, stem node, panicle, flower and immature seed. Weakly expressed in root and leaf.

May regulate cell proliferation and plant growth. In Oryza sativa subsp. japonica (Rice), this protein is SAP-like protein BP-73 (BP-73).